Consider the following 331-residue polypeptide: Ribosomal RNA small subunit methyltransferase H (331 aa).

Residues 38–40 (GGY), D56, F83, D100, and Q107 contribute to the S-adenosyl-L-methionine site. Residues 287–331 (DEAELAENPRARSARLRVGVRTDAPAGKVDPQALGTPLIPKKGRR) form a disordered region.

The protein belongs to the methyltransferase superfamily. RsmH family.

It localises to the cytoplasm. The catalysed reaction is cytidine(1402) in 16S rRNA + S-adenosyl-L-methionine = N(4)-methylcytidine(1402) in 16S rRNA + S-adenosyl-L-homocysteine + H(+). Functionally, specifically methylates the N4 position of cytidine in position 1402 (C1402) of 16S rRNA. The chain is Ribosomal RNA small subunit methyltransferase H from Cereibacter sphaeroides (strain KD131 / KCTC 12085) (Rhodobacter sphaeroides).